The chain runs to 215 residues: Adenylate kinase (215 aa).

10–15 is a binding site for ATP; sequence GAGKGT. Positions 30–59 are NMP; that stretch reads STGDILRENVKNQTELGKKAKEYMDKGLLV. AMP-binding positions include Thr31, Arg36, 57–59, 85–88, and Gln92; these read LLV and GFPR. The interval 126–163 is LID; the sequence is GRRICKSCGASFHVVYRPPKKEGICDICGGQLYQREDD. Arg127 serves as a coordination point for ATP. Positions 130 and 133 each coordinate Zn(2+). 136–137 is an ATP binding site; the sequence is SF. The Zn(2+) site is built by Cys150 and Cys153. Residues Arg160 and Arg171 each coordinate AMP. Glu199 serves as a coordination point for ATP.

This sequence belongs to the adenylate kinase family. As to quaternary structure, monomer.

It is found in the cytoplasm. It catalyses the reaction AMP + ATP = 2 ADP. The protein operates within purine metabolism; AMP biosynthesis via salvage pathway; AMP from ADP: step 1/1. In terms of biological role, catalyzes the reversible transfer of the terminal phosphate group between ATP and AMP. Plays an important role in cellular energy homeostasis and in adenine nucleotide metabolism. The chain is Adenylate kinase from Caldicellulosiruptor saccharolyticus (strain ATCC 43494 / DSM 8903 / Tp8T 6331).